Here is a 744-residue protein sequence, read N- to C-terminus: MAVPPRPLQLLGILFIISLNSVRLIQAGAYYGIKPLPPQIPPQIPPQIPQYQPLGQQVPHMPLGKDGLSMGKEMPHMQYGKEYPHLPQYMKEIPPVPRMGKEVVPKKGKGEVPLASLRGEQGPRGEPGPRGPPGPPGLPGHGMPGIKGKPGPQGYPGIGKPGMPGMPGKPGAMGMPGAKGEIGPKGEIGPMGIPGPQGPPGPHGLPGIGKPGGPGLPGQPGAKGERGPKGPPGPPGLQGPKGEKGFGMPGLPGLKGPPGMHGPPGPVGLPGVGKPGVTGFPGPQGPLGKPGPPGEPGPQGLIGVPGVQGPPGMPGVGKPGQDGIPGQPGFPGGKGEQGLPGLPGPPGLPGVGKPGFPGPKGDRGIGGVPGVLGPRGEKGPIGAPGMGGPPGEPGLPGIPGPMGPPGAIGFPGPKGEGGVVGPQGPPGPKGEPGLQGFPGKPGFLGEVGPPGMRGLPGPIGPKGEGGHKGLPGLPGVPGLLGPKGEPGIPGDQGLQGPPGIPGIVGPSGPIGPPGIPGPKGEPGLPGPPGFPGVGKPGVAGLHGPPGKPGALGPQGQPGLPGPPGPPGPPGPPAVMPTPSPQGEYLPDMGLGIDGVKPPHAYAGKKGKHGGPAYEMPAFTAELTVPFPPVGAPVKFDKLLYNGRQNYNPQTGIFTCEVPGVYYFAYHVHCKGGNVWVALFKNNEPMMYTYDEYKKGFLDQASGSAVLLLRPGDQVFLQMPSEQAAGLYAGQYVHSSFSGYLLYPM.

A signal peptide spans 1-24 (MAVPPRPLQLLGILFIISLNSVRL). The interval 29-118 (AYYGIKPLPP…KGEVPLASLR (90 aa)) is nonhelical region (NC2). Positions 101–110 (KEVVPKKGKG) are enriched in basic and acidic residues. Disordered stretches follow at residues 101 to 395 (KEVV…EPGL), 412 to 439 (GPKG…GFPG), and 457 to 590 (GPIG…DMGL). Positions 119–572 (GEQGPRGEPG…PGPPGPPGPP (454 aa)) are triple-helical region (COL1). A compositionally biased stretch (pro residues) spans 129 to 138 (PRGPPGPPGL). Residues 169 to 191 (KPGAMGMPGAKGEIGPKGEIGPM) show a composition bias toward low complexity. Positions 204–218 (GLPGIGKPGGPGLPG) are enriched in gly residues. The span at 298-307 (PQGLIGVPGV) shows a compositional bias: low complexity. 2 stretches are compositionally biased toward gly residues: residues 329 to 338 (GFPGGKGEQG) and 412 to 421 (GPKGEGGVVG). Low complexity-rich tracts occupy residues 470 to 507 (LPGL…VGPS) and 548 to 557 (PGALGPQGQP). Residues 559 to 579 (LPGPPGPPGPPGPPAVMPTPS) show a composition bias toward pro residues. A nonhelical region (NC1) region spans residues 573–744 (AVMPTPSPQG…SFSGYLLYPM (172 aa)). The 134-residue stretch at 611 to 744 (PAYEMPAFTA…SFSGYLLYPM (134 aa)) folds into the C1q domain.

Homotrimers, or heterotrimers in association with alpha 2(VIII) type collagens. Four homotrimers can form a tetrahedron stabilized by central interacting C-terminal NC1 trimers. Prolines at the third position of the tripeptide repeating unit (G-X-Y) are hydroxylated in some or all of the chains. In terms of processing, proteolytically cleaved by neutrophil elastase, in vitro. Proteolytic processing produces the C-terminal NC1 domain fragment, vastatin. In terms of tissue distribution, high levels in calvarium, eye and skin of newborn mice; also in various epithelial, endothelial and mesenchymal cells.

Its subcellular location is the secreted. The protein resides in the extracellular space. It is found in the extracellular matrix. It localises to the basement membrane. Macromolecular component of the subendothelium. Major component of the Descemet's membrane (basement membrane) of corneal endothelial cells. Also a component of the endothelia of blood vessels. Necessary for migration and proliferation of vascular smooth muscle cells and thus, has a potential role in the maintenance of vessel wall integrity and structure, in particular in atherogenesis. In terms of biological role, vastatin, the C-terminal fragment comprising the NC1 domain, inhibits aortic endothelial cell proliferation and causes cell apoptosis. The sequence is that of Collagen alpha-1(VIII) chain (Col8a1) from Mus musculus (Mouse).